Consider the following 355-residue polypeptide: tRNA N6-adenosine threonylcarbamoyltransferase (355 aa).

Fe cation contacts are provided by His-113 and His-117. Substrate-binding positions include 135 to 139 (LASGG), Asp-168, Gly-181, and Asn-279. A Fe cation-binding site is contributed by Asp-307.

The protein belongs to the KAE1 / TsaD family. Requires Fe(2+) as cofactor.

Its subcellular location is the cytoplasm. It catalyses the reaction L-threonylcarbamoyladenylate + adenosine(37) in tRNA = N(6)-L-threonylcarbamoyladenosine(37) in tRNA + AMP + H(+). In terms of biological role, required for the formation of a threonylcarbamoyl group on adenosine at position 37 (t(6)A37) in tRNAs that read codons beginning with adenine. Is involved in the transfer of the threonylcarbamoyl moiety of threonylcarbamoyl-AMP (TC-AMP) to the N6 group of A37, together with TsaE and TsaB. TsaD likely plays a direct catalytic role in this reaction. The chain is tRNA N6-adenosine threonylcarbamoyltransferase from Bradyrhizobium sp. (strain BTAi1 / ATCC BAA-1182).